A 372-amino-acid polypeptide reads, in one-letter code: Glutamate 5-kinase (372 aa).

ATP is bound at residue lysine 14. Substrate contacts are provided by serine 54, aspartate 141, and asparagine 153. Residues 173 to 174 (TD) and 215 to 221 (TGGMLTK) each bind ATP. The PUA domain maps to 280 to 358 (AGRLVLDDGA…RDIERLLGYV (79 aa)).

Belongs to the glutamate 5-kinase family.

The protein resides in the cytoplasm. It catalyses the reaction L-glutamate + ATP = L-glutamyl 5-phosphate + ADP. It participates in amino-acid biosynthesis; L-proline biosynthesis; L-glutamate 5-semialdehyde from L-glutamate: step 1/2. Functionally, catalyzes the transfer of a phosphate group to glutamate to form L-glutamate 5-phosphate. The protein is Glutamate 5-kinase of Laribacter hongkongensis (strain HLHK9).